The sequence spans 268 residues: Shikimate dehydrogenase (NADP(+)) (268 aa).

Threonine 62 lines the shikimate pocket. The active-site Proton acceptor is the lysine 66. Glutamate 78 is an NADP(+) binding site. Shikimate-binding residues include asparagine 87 and aspartate 102. NADP(+) contacts are provided by residues 126–130 and leucine 207; that span reads GSGGI. Tyrosine 209 contributes to the shikimate binding site. NADP(+) is bound at residue glycine 230.

This sequence belongs to the shikimate dehydrogenase family. In terms of assembly, homodimer.

The catalysed reaction is shikimate + NADP(+) = 3-dehydroshikimate + NADPH + H(+). The protein operates within metabolic intermediate biosynthesis; chorismate biosynthesis; chorismate from D-erythrose 4-phosphate and phosphoenolpyruvate: step 4/7. In terms of biological role, involved in the biosynthesis of the chorismate, which leads to the biosynthesis of aromatic amino acids. Catalyzes the reversible NADPH linked reduction of 3-dehydroshikimate (DHSA) to yield shikimate (SA). This is Shikimate dehydrogenase (NADP(+)) from Thermoplasma acidophilum (strain ATCC 25905 / DSM 1728 / JCM 9062 / NBRC 15155 / AMRC-C165).